Consider the following 385-residue polypeptide: POU domain, class 3, transcription factor 2-B (385 aa).

Disordered stretches follow at residues 106–136 (LVHPAHGNHHGPGAWRSTGSTHLSSMASSNG), 149–209 (NGMI…TPTS), and 351–385 (EKRMTPPGGTIPGAEDVYGASRDTPPHLGVQTSVQ). The span at 122–136 (STGSTHLSSMASSNG) shows a compositional bias: polar residues. Basic and acidic residues predominate over residues 165 to 178 (LRDSHDDHHGDHGH). Over residues 179 to 196 (QQPSQTQQQQQQHSQLQG) the composition is skewed to low complexity. Residues 204–278 (EDTPTSDDLE…LLNKWLEEAD (75 aa)) enclose the POU-specific domain. A DNA-binding region (homeobox) is located at residues 296-355 (KRKKRTSIEVSVKGALESHFLKCPKPAAQEITSLADSLQLEKEVVRVWFCNRRQKEKRMT).

It belongs to the POU transcription factor family. Class-3 subfamily. In terms of tissue distribution, expressed in the developing brain and spinal cord. Also found in a restricted region of the auditory vesicle during development. In the adult, expression is restricted to the brain.

It localises to the nucleus. Transcription factor that may be implicated in patterning of the central nervous system during early development. The chain is POU domain, class 3, transcription factor 2-B (pou3f2-b) from Xenopus laevis (African clawed frog).